A 225-amino-acid polypeptide reads, in one-letter code: Agamous-like MADS-box protein MADS1 (225 aa).

In terms of tissue distribution, expressed in flowers and seeds.

The protein resides in the nucleus. In terms of biological role, probable transcription factor involved in flower development. This Vitis vinifera (Grape) protein is Agamous-like MADS-box protein MADS1.